A 368-amino-acid polypeptide reads, in one-letter code: MYRNTMRSASRPVIASLRSSTIRAAPRRFASTAPADKPRSFKGSLVRLGLAFGAVYYYNTSPIFADEAISKTVPAPAAFSDDDLPTVDSIVEEKRKQIKAKSEETAASSKTPESQQSNPQTAAADGSPAALEEEAGQQGAFNPETGEINWDCPCLGGMADGPCGEEFKTAFSCFVFSQEEPKGMDCIDKFQGMQECFKKYPDIYGAELADDEDGAPTPDFGDEQPSGEPTTAEVKSNGELARETKDKTAADATKFDDSQKPAESKTPAKTTSTSTDSAQKPAVDAHRDAEPKSDAETASSGSRMVQDVAIPIEKPVNDKYWQDMHKSEVQKKEVTVGITQAHDATAANEEIKHIERQEAAKKNAEKKQ.

The transit peptide at 1–29 directs the protein to the mitochondrion; the sequence is MYRNTMRSASRPVIASLRSSTIRAAPRRF. Residues 30–47 lie on the Mitochondrial matrix side of the membrane; the sequence is ASTAPADKPRSFKGSLVR. A helical; Signal-anchor for type II membrane protein membrane pass occupies residues 48–65; sequence LGLAFGAVYYYNTSPIFA. Residues 66–368 are Mitochondrial intermembrane-facing; it reads DEAISKTVPA…AAKKNAEKKQ (303 aa). Residues 95–104 are compositionally biased toward basic and acidic residues; the sequence is RKQIKAKSEE. The disordered stretch occupies residues 95–144; that stretch reads RKQIKAKSEETAASSKTPESQQSNPQTAAADGSPAALEEEAGQQGAFNPE. Polar residues predominate over residues 105–121; it reads TAASSKTPESQQSNPQT. Intrachain disulfides connect C152–C154, C163–C196, and C173–C186. Positions 160-204 constitute a CHCH domain; sequence DGPCGEEFKTAFSCFVFSQEEPKGMDCIDKFQGMQECFKKYPDIY. 2 consecutive short sequence motifs (cx9C motif) follow at residues 163–173 and 186–196; these read CGEEFKTAFSC and CIDKFQGMQEC. Positions 208 to 310 are disordered; that stretch reads LADDEDGAPT…GSRMVQDVAI (103 aa). The segment covering 240 to 263 has biased composition (basic and acidic residues); sequence LARETKDKTAADATKFDDSQKPAE. The span at 264–280 shows a compositional bias: low complexity; that stretch reads SKTPAKTTSTSTDSAQK. Residues 283-295 are compositionally biased toward basic and acidic residues; the sequence is VDAHRDAEPKSDA.

Monomer. Requires Cu(2+) as cofactor. It depends on Zn(2+) as a cofactor.

The protein localises to the mitochondrion inner membrane. Required for the import and folding of small cysteine-containing proteins (small Tim) in the mitochondrial intermembrane space (IMS). Forms a redox cycle with ERV1 that involves a disulfide relay system. Precursor proteins to be imported into the IMS are translocated in their reduced form into the mitochondria. The oxidized form of MIA40 forms a transient intermolecular disulfide bridge with the reduced precursor protein, resulting in oxidation of the precursor protein that now contains an intramolecular disulfide bond and is able to undergo folding in the IMS. In Gibberella zeae (strain ATCC MYA-4620 / CBS 123657 / FGSC 9075 / NRRL 31084 / PH-1) (Wheat head blight fungus), this protein is Mitochondrial intermembrane space import and assembly protein 40 (MIA40).